The sequence spans 256 residues: uncharacterized protein (256 aa).

A signal peptide spans 1–24 (MIKRVNKLVLGISLLFLVISITAG). Cys-25 carries the N-palmitoyl cysteine lipid modification. The S-diacylglycerol cysteine moiety is linked to residue Cys-25.

Belongs to the staphylococcal tandem lipoprotein family.

It localises to the cell membrane. This is an uncharacterized protein from Staphylococcus aureus.